Consider the following 62-residue polypeptide: Sucrase-isomaltase, intestinal (62 aa).

Topologically, residues 2-12 (ARKKFSGLEIX) are cytoplasmic. A Phosphoserine; by PKA modification is found at serine 7. Residues 13–32 (LIVLFAIVLSIAIALVVVXA) traverse the membrane as a helical; Signal-anchor for type II membrane protein segment. The Lumenal portion of the chain corresponds to 33–38 (SKXPAV). Position 59 is a sulfotyrosine (tyrosine 59).

This sequence belongs to the glycosyl hydrolase 31 family. As to quaternary structure, the resulting sucrase and isomaltase subunits stay associated with one another in a complex by non-covalent linkages. The precursor is proteolytically cleaved when exposed to pancreatic proteases in the intestinal lumen. Post-translationally, sulfated.

It localises to the apical cell membrane. The catalysed reaction is Hydrolysis of sucrose and maltose by an alpha-D-glucosidase-type action.. It carries out the reaction Hydrolysis of (1-&gt;6)-alpha-D-glucosidic linkages in some oligosaccharides produced from starch and glycogen by alpha-amylase, and in isomaltose.. In terms of biological role, plays an important role in the final stage of carbohydrate digestion. Isomaltase activity is specific for both alpha-1,4- and alpha-1,6-oligosaccharides. In Sus scrofa (Pig), this protein is Sucrase-isomaltase, intestinal (SI).